Consider the following 158-residue polypeptide: Small ribosomal subunit protein uS9 (158 aa).

The protein belongs to the universal ribosomal protein uS9 family.

The chain is Small ribosomal subunit protein uS9 from Brucella abortus (strain S19).